We begin with the raw amino-acid sequence, 389 residues long: uncharacterized protein (389 aa).

Over residues 1-12 (MVHATSQSASTE) the composition is skewed to polar residues. 2 disordered regions span residues 1–49 (MVHA…DEDL) and 86–111 (HKSMGSTRGKKKRGKTAKKAKKANRA). Positions 40-49 (ESGDEYDEDL) are enriched in acidic residues. Over residues 93–110 (RGKKKRGKTAKKAKKANR) the composition is skewed to basic residues.

This is an uncharacterized protein from Caenorhabditis elegans.